The chain runs to 52 residues: MKTHVKKDLDKGWHMLIQEARSIGLGIHDVRQFLESETASRKKNHKKTVRQD.

The region spanning 1-38 (MKTHVKKDLDKGWHMLIQEARSIGLGIHDVRQFLESET) is the Sin domain.

Component of the SlrR/SlrA complex.

Functionally, required specifically for induction of eps and yqxM operons by antagonizing SinR. Regulates SlrR activity. Controls the initiation of biofilm formation. The sequence is that of Transcriptional regulator SlrA (slrA) from Bacillus subtilis (strain 168).